A 129-amino-acid polypeptide reads, in one-letter code: Small ribosomal subunit protein uS8 (129 aa).

This sequence belongs to the universal ribosomal protein uS8 family. As to quaternary structure, part of the 30S ribosomal subunit. Contacts proteins S5 and S12.

One of the primary rRNA binding proteins, it binds directly to 16S rRNA central domain where it helps coordinate assembly of the platform of the 30S subunit. The chain is Small ribosomal subunit protein uS8 from Mycoplasma mycoides subsp. mycoides SC (strain CCUG 32753 / NCTC 10114 / PG1).